Here is a 265-residue protein sequence, read N- to C-terminus: Putative hydro-lyase PA2116 (265 aa).

Belongs to the D-glutamate cyclase family.

This is Putative hydro-lyase PA2116 from Pseudomonas aeruginosa (strain ATCC 15692 / DSM 22644 / CIP 104116 / JCM 14847 / LMG 12228 / 1C / PRS 101 / PAO1).